The sequence spans 280 residues: MRRAELAGLKTMAWVPAESAVEELMPRLLPVEPCDLTEGFDPSVPPRTPQEYLRRVQIEAAQCPDVVVAQIDPKKLKRKQSVNISLSGCQPAPEGYSPTLQWQQQQVAQFSTVRQNVNKHRSHWKSQQLDSNVTMPKSEDEEGWKKFCLGEKLCADGAVGPATNESPGIDYVQIGFPPLLSIVSRMNQATVTSVLEYLSNWFGERDFTPELGRWLYALLACLEKPLLPEAHSLIRQLARRCSEVRLLVDSKDDERVPALNLLICLVSRYFDQRDLADEPS.

The may play a minor inhibitory role in snRNA binding to 5Sm (SNRPD1, SNRPD2, SNRPE, SNRPF and SNRPG) during snRNP assembly by inserting into the RNA binding pocket of 5Sm stretch occupies residues 1–39 (MRRAELAGLKTMAWVPAESAVEELMPRLLPVEPCDLTEG). S81 and S166 each carry phosphoserine.

This sequence belongs to the gemin-2 family. Monomer. Part of the core SMN complex that contains SMN1, GEMIN2/SIP1, DDX20/GEMIN3, GEMIN4, GEMIN5, GEMIN6, GEMIN7, GEMIN8 and STRAP/UNRIP. Part of the SMN-Sm complex that contains SMN1, GEMIN2/SIP1, DDX20/GEMIN3, GEMIN4, GEMIN5, GEMIN6, GEMIN7, GEMIN8, STRAP/UNRIP and the Sm proteins SNRPB, SNRPD1, SNRPD2, SNRPD3, SNRPE, SNRPF and SNRPG. Interacts with GEMIN5; the interaction is direct. Interacts (via C-terminus) with SMN1; the interaction is direct. Interacts with SNRPD1; the interaction is direct. Interacts with SNRPD2; the interaction is direct. Interacts (via N-terminus) with SNRPF; the interaction is direct. Interacts (via N-terminus) with SNRPE; the interaction is direct. Interacts (via N-terminus) with SNRPG; the interaction is direct.

The protein resides in the nucleus. Its subcellular location is the gem. It is found in the cytoplasm. The SMN complex catalyzes the assembly of small nuclear ribonucleoproteins (snRNPs), the building blocks of the spliceosome, and thereby plays an important role in the splicing of cellular pre-mRNAs. Most spliceosomal snRNPs contain a common set of Sm proteins SNRPB, SNRPD1, SNRPD2, SNRPD3, SNRPE, SNRPF and SNRPG that assemble in a heptameric protein ring on the Sm site of the small nuclear RNA to form the core snRNP (Sm core). In the cytosol, the Sm proteins SNRPD1, SNRPD2, SNRPE, SNRPF and SNRPG (5Sm) are trapped in an inactive 6S pICln-Sm complex by the chaperone CLNS1A that controls the assembly of the core snRNP. To assemble core snRNPs, the SMN complex accepts the trapped 5Sm proteins from CLNS1A. Binding of snRNA inside 5Sm ultimately triggers eviction of the SMN complex, thereby allowing binding of SNRPD3 and SNRPB to complete assembly of the core snRNP. Within the SMN complex, GEMIN2 constrains the conformation of 5Sm, thereby promoting 5Sm binding to snRNA containing the snRNP code (a nonameric Sm site and a 3'-adjacent stem-loop), thus preventing progression of assembly until a cognate substrate is bound. The sequence is that of Gem-associated protein 2 from Homo sapiens (Human).